A 164-amino-acid chain; its full sequence is Ribosome-binding factor A (164 aa).

The tract at residues 123 to 164 is disordered; the sequence is ARDLGVPPSGEDDGDDEADDEDDDGGEEGPGAAAPPPADEGR. The span at 132–149 shows a compositional bias: acidic residues; that stretch reads GEDDGDDEADDEDDDGGE. A compositionally biased stretch (pro residues) spans 155 to 164; the sequence is AAPPPADEGR.

The protein belongs to the RbfA family. In terms of assembly, monomer. Binds 30S ribosomal subunits, but not 50S ribosomal subunits or 70S ribosomes.

The protein localises to the cytoplasm. One of several proteins that assist in the late maturation steps of the functional core of the 30S ribosomal subunit. Associates with free 30S ribosomal subunits (but not with 30S subunits that are part of 70S ribosomes or polysomes). Required for efficient processing of 16S rRNA. May interact with the 5'-terminal helix region of 16S rRNA. The polypeptide is Ribosome-binding factor A (Rhodospirillum rubrum (strain ATCC 11170 / ATH 1.1.1 / DSM 467 / LMG 4362 / NCIMB 8255 / S1)).